A 2180-amino-acid chain; its full sequence is DNA polymerase epsilon catalytic subunit A (2180 aa).

4 residues coordinate Zn(2+): cysteine 2067, cysteine 2070, cysteine 2089, and cysteine 2092. Residues cysteine 2067–cysteine 2092 form a CysA-type zinc finger. [4Fe-4S] cluster-binding residues include cysteine 2123, cysteine 2126, cysteine 2138, and cysteine 2140. Positions cysteine 2123 to cysteine 2140 match the CysB motif motif.

The protein belongs to the DNA polymerase type-B family. Heterotetramer. Consists of 4 subunits: POL2, DPB2, DPB3 and DPB4. [4Fe-4S] cluster serves as cofactor.

It is found in the nucleus. It catalyses the reaction DNA(n) + a 2'-deoxyribonucleoside 5'-triphosphate = DNA(n+1) + diphosphate. In terms of biological role, DNA polymerase II participates in chromosomal DNA replication. In Eremothecium gossypii (strain ATCC 10895 / CBS 109.51 / FGSC 9923 / NRRL Y-1056) (Yeast), this protein is DNA polymerase epsilon catalytic subunit A (POL2).